The sequence spans 54 residues: uncharacterized protein (54 aa).

A signal peptide spans 1 to 23 (MKELIFFLLIIVILFVVFMVVSS).

This is an uncharacterized protein from Acheta domesticus (House cricket).